The primary structure comprises 312 residues: Acetylglutamate kinase (312 aa).

Substrate is bound by residues 76 to 77 (GG), R98, and N199.

It belongs to the acetylglutamate kinase family. ArgB subfamily.

It localises to the cytoplasm. It carries out the reaction N-acetyl-L-glutamate + ATP = N-acetyl-L-glutamyl 5-phosphate + ADP. Its pathway is amino-acid biosynthesis; L-arginine biosynthesis; N(2)-acetyl-L-ornithine from L-glutamate: step 2/4. Its function is as follows. Catalyzes the ATP-dependent phosphorylation of N-acetyl-L-glutamate. The sequence is that of Acetylglutamate kinase from Beutenbergia cavernae (strain ATCC BAA-8 / DSM 12333 / CCUG 43141 / JCM 11478 / NBRC 16432 / NCIMB 13614 / HKI 0122).